The following is a 488-amino-acid chain: NADH-ubiquinone oxidoreductase chain 2 (488 aa).

14 helical membrane-spanning segments follow: residues 11 to 31, 38 to 58, 74 to 94, 106 to 126, 129 to 149, 162 to 182, 211 to 231, 239 to 259, 271 to 291, 299 to 319, 331 to 351, 376 to 396, 412 to 434, and 460 to 480; these read MIKYSIYLVPLIIMILLSISI, MMLLFKSLKLTIILILVLLTI, ELITFVEYILLVVSYLIISMF, ITEEALILMYSSLIGMLISME, NLITLFLSLEITSICFYILAL, LKYYIIGGIASTIILLGIVSI, IALIVLGLIIKLGVAPFHGWL, GMLMTFYLTITQKIVTIIVLI, IEVINKGLLVLILVTLIVGTV, VIRFIAYSAIVNSALLILFFV, IYYLINYIIGLAVLINIIIGV, IGISLIIVLIYLAGLPPFTNF, IYITMIIFFLTVGIMIYYMNVVK, and IVGGIIWIIISQIYLDEIISI.

This sequence belongs to the complex I subunit 2 family.

It is found in the mitochondrion inner membrane. The enzyme catalyses a ubiquinone + NADH + 5 H(+)(in) = a ubiquinol + NAD(+) + 4 H(+)(out). Functionally, core subunit of the mitochondrial membrane respiratory chain NADH dehydrogenase (Complex I) that is believed to belong to the minimal assembly required for catalysis. Complex I functions in the transfer of electrons from NADH to the respiratory chain. The immediate electron acceptor for the enzyme is believed to be ubiquinone. In Dictyostelium discoideum (Social amoeba), this protein is NADH-ubiquinone oxidoreductase chain 2 (nad2).